Consider the following 492-residue polypeptide: E1B 55 kDa protein (492 aa).

Residues 22-112 (ENMEGSQDED…ERNPSGNNSR (91 aa)) are disordered. Low complexity predominate over residues 34–44 (RLLASAASGSS). S486 and S487 each carry phosphoserine. T491 carries the phosphothreonine modification.

The protein belongs to the adenoviridae E1B 55 kDa protein family. As to quaternary structure, interacts with host PML-4 and PML-5; this interaction promotes efficient subnuclear targeting of E1B-55K to PML nuclear bodies. Interacts with E4-ORF3 protein. Interacts with E4-ORF6 protein.

Its subcellular location is the host nucleus. The protein resides in the host cytoplasm. Plays a major role to prevent cellular inhibition of viral genome replication. Assembles an SCF-like E3 ubiquitin ligase complex based on the cellular proteins ELOB, ELOC, CUL5 and RBX1, in cooperation with viral E4orf6. This viral RING-type ligase ubiquitinates cellular substrates and targets them to proteasomal degradation: TP53/p53, LIG4, MRE11-RAD50-NBS1 (MRN) complex, ITGA3, DAXX and BLM. E1B-55K probably acts as the substrate-specific adapter of the SCF-like E3 ubiquitin ligase complex. Degradation of host TP53/p53 activity is essential for preventing E1A-induced TP53 accumulation that would otherwise lead to cell apoptosis and growth arrest. E1B-55K also inactivates TP53 transcription-factor activity by binding its transactivation domain. E1B-55K also functions as a SUMO1 E3 ligase for TP53 which causes the latter to be sequestered in promyelocytic leukemia (PML) nuclear bodies thereby contributing to maximal inhibition of TP53 function. This Human adenovirus B serotype 7 (HAdV-7) protein is E1B 55 kDa protein.